We begin with the raw amino-acid sequence, 215 residues long: Cytochrome b6 (215 aa).

Residues 32–52 (IFYCLGGITLTCFLVQVATGF) traverse the membrane as a helical segment. Cys-35 is a binding site for heme c. The heme b site is built by His-86 and His-100. 3 helical membrane passes run 90–110 (ASMM…TGGF), 116–136 (LTWV…VTGY), and 186–206 (LHTF…FLMI). Heme b contacts are provided by His-187 and His-202.

The protein belongs to the cytochrome b family. PetB subfamily. The 4 large subunits of the cytochrome b6-f complex are cytochrome b6, subunit IV (17 kDa polypeptide, PetD), cytochrome f and the Rieske protein, while the 4 small subunits are PetG, PetL, PetM and PetN. The complex functions as a dimer. Requires heme b as cofactor. Heme c is required as a cofactor.

It localises to the plastid. It is found in the chloroplast thylakoid membrane. In terms of biological role, component of the cytochrome b6-f complex, which mediates electron transfer between photosystem II (PSII) and photosystem I (PSI), cyclic electron flow around PSI, and state transitions. This Eucalyptus globulus subsp. globulus (Tasmanian blue gum) protein is Cytochrome b6.